Consider the following 328-residue polypeptide: 4-hydroxy-2-oxoglutarate aldolase, mitochondrial (328 aa).

A mitochondrion-targeting transit peptide spans 1–26 (MFGRTLFPARVIALGSGLFRTPLRTL). A substrate-binding site is contributed by 76–77 (SN). The Schiff-base intermediate with substrate role is filled by Lys195. The substrate site is built by Ser197 and Gly221.

It belongs to the DapA family. Homotetramer.

Its subcellular location is the mitochondrion. The catalysed reaction is (4S)-4-hydroxy-2-oxoglutarate = glyoxylate + pyruvate. It catalyses the reaction (4R)-4-hydroxy-2-oxoglutarate = glyoxylate + pyruvate. With respect to regulation, inhibited by divalent cations. Catalyzes the final step in the metabolic pathway of hydroxyproline. The sequence is that of 4-hydroxy-2-oxoglutarate aldolase, mitochondrial (hoga1) from Xenopus tropicalis (Western clawed frog).